Reading from the N-terminus, the 282-residue chain is Bifunctional protein FolD (282 aa).

Residues 164–166 and serine 189 contribute to the NADP(+) site; that span reads GRS.

Belongs to the tetrahydrofolate dehydrogenase/cyclohydrolase family. Homodimer.

It carries out the reaction (6R)-5,10-methylene-5,6,7,8-tetrahydrofolate + NADP(+) = (6R)-5,10-methenyltetrahydrofolate + NADPH. The enzyme catalyses (6R)-5,10-methenyltetrahydrofolate + H2O = (6R)-10-formyltetrahydrofolate + H(+). It participates in one-carbon metabolism; tetrahydrofolate interconversion. Its function is as follows. Catalyzes the oxidation of 5,10-methylenetetrahydrofolate to 5,10-methenyltetrahydrofolate and then the hydrolysis of 5,10-methenyltetrahydrofolate to 10-formyltetrahydrofolate. This is Bifunctional protein FolD from Streptococcus suis (strain 98HAH33).